Here is a 1017-residue protein sequence, read N- to C-terminus: Fanconi-associated nuclease 1 (1017 aa).

Basic and acidic residues predominate over residues 1 to 10 (MMSEGKPPDK). The interval 1 to 23 (MMSEGKPPDKKRPRRSLSISKNK) is disordered. Positions 11–23 (KRPRRSLSISKNK) are enriched in basic residues. The D-box motif lies at 14–22 (RRSLSISKN). A UBZ4-type zinc finger spans residues 41-69 (KLACPVCSKMVPRYDLNRHLDEMCANNDF). Zn(2+)-binding residues include Cys-44, Cys-47, His-59, and Cys-64. Disordered stretches follow at residues 95–121 (EDVT…KREV) and 170–189 (IDKD…STVV). Residues 179–189 (SSPQSSKSTVV) are compositionally biased toward polar residues. Residue Ser-180 is modified to Phosphoserine. The short motif at 212–214 (KEN) is the KEN box element. A coiled-coil region spans residues 671–696 (SRFVEILQRLHMYEEAVRELESLLSQ). Glu-834, Asp-960, Glu-975, and Val-976 together coordinate Mn(2+). A VRR-NUC domain is found at 895 to 1007 (EESLRAWVAA…GAEVEVCHVV (113 aa)).

It belongs to the FAN1 family. Interacts with FANCD2 (when monoubiquitinated). Interacts with FANCI, MLH1, MLH3 and PMS2. Mn(2+) is required as a cofactor. Mg(2+) serves as cofactor. Ubiquitinated and degraded during mitotic exit by the APC/C-Cdh1 complex.

It is found in the nucleus. The enzyme catalyses Hydrolytically removes 5'-nucleotides successively from the 3'-hydroxy termini of 3'-hydroxy-terminated oligonucleotides.. Its function is as follows. Nuclease required for the repair of DNA interstrand cross-links (ICL) recruited at sites of DNA damage by monoubiquitinated FANCD2. Specifically involved in repair of ICL-induced DNA breaks by being required for efficient homologous recombination, probably in the resolution of homologous recombination intermediates. Not involved in DNA double-strand breaks resection. Acts as a 5'-3' exonuclease that anchors at a cut end of DNA and cleaves DNA successively at every third nucleotide, allowing to excise an ICL from one strand through flanking incisions. Probably keeps excising with 3'-flap annealing until it reaches and unhooks the ICL. Acts at sites that have a 5'-terminal phosphate anchor at a nick or a 1- or 2-nucleotide flap and is augmented by a 3' flap. Also has endonuclease activity toward 5'-flaps. This is Fanconi-associated nuclease 1 from Homo sapiens (Human).